Here is a 972-residue protein sequence, read N- to C-terminus: Hemoglobin and hemoglobin-haptoglobin-binding protein (972 aa).

The signal sequence occupies residues 1-22; that stretch reads MKANKLSAITLCILGYAHTVYA. The TonB box motif lies at 32 to 39; that stretch reads ETIVVSSE. The 130-residue stretch at 38 to 167 folds into the TBDR plug domain; that stretch reads SEDDSVHNKN…LGGTVSFESK (130 aa). A TBDR beta-barrel domain is found at 175 to 972; the sequence is DKNYHFGYKT…NFRVNAEITF (798 aa). A TonB C-terminal box motif is present at residues 955-972; that stretch reads KRFNAPGRNFRVNAEITF.

This sequence belongs to the TonB-dependent receptor family. Hemoglobin/haptoglobin binding protein subfamily.

Its subcellular location is the cell outer membrane. Functionally, acts as a receptor for hemoglobin or the hemoglobin/haptoglobin complex of the host and is required for heme uptake. May be involved in virulence. This Haemophilus ducreyi (strain 35000HP / ATCC 700724) protein is Hemoglobin and hemoglobin-haptoglobin-binding protein.